The chain runs to 61 residues: Large ribosomal subunit protein uL30 (61 aa).

Belongs to the universal ribosomal protein uL30 family. In terms of assembly, part of the 50S ribosomal subunit.

In Chlorobium limicola (strain DSM 245 / NBRC 103803 / 6330), this protein is Large ribosomal subunit protein uL30.